We begin with the raw amino-acid sequence, 414 residues long: Secernin-1 (414 aa).

Ala-2 carries the N-acetylalanine modification. The active site involves Cys-9.

The protein belongs to the peptidase C69 family. Secernin subfamily.

Its subcellular location is the cytoplasm. In terms of biological role, regulates exocytosis in mast cells. Increases both the extent of secretion and the sensitivity of mast cells to stimulation with calcium. The sequence is that of Secernin-1 (SCRN1) from Bos taurus (Bovine).